The chain runs to 410 residues: UBX domain-containing protein 3 (410 aa).

2 disordered regions span residues 46 to 139 (EEDH…PDPK) and 154 to 212 (TISP…EKPL). The span at 65 to 85 (GSSSGISGGDQQPPRPLQRQQ) shows a compositional bias: low complexity. The span at 86-97 (NTQGQGMKSGTA) shows a compositional bias: polar residues. Ser156, Ser167, and Ser186 each carry phosphoserine. Positions 163 to 174 (SGPSSLASSWAS) are enriched in low complexity. Over residues 183-196 (NEASGSTTPVTQSG) the composition is skewed to polar residues. Thr190 bears the Phosphothreonine mark. The SEP domain occupies 211–276 (PLRRTLYFWR…VQHRMDEDYV (66 aa)). The UBX domain maps to 334-410 (ENKPTTRIQV…KNASLVQKSL (77 aa)).

In terms of assembly, interacts with cdc48.

Involved in CDC48-dependent protein degradation through the ubiquitin/proteasome pathway. Involved in delivery of substrates to the 26S proteasome. Also required for membrane fusion and sporulation. This Schizosaccharomyces pombe (strain 972 / ATCC 24843) (Fission yeast) protein is UBX domain-containing protein 3 (ubx3).